Consider the following 529-residue polypeptide: Ribonuclease Y (529 aa).

A helical membrane pass occupies residues 4 to 24 (GLIYISLEVLVACLITALIMY). The region spanning 216–297 (LTSRIALPCS…NRIEEVYHRV (82 aa)) is the KH domain. An HD domain is found at 342 to 435 (ALQHSKEVAL…VCAADALSAG (94 aa)).

It belongs to the RNase Y family.

It localises to the cell membrane. Functionally, endoribonuclease that initiates mRNA decay. This is Ribonuclease Y from Helicobacter pylori (strain J99 / ATCC 700824) (Campylobacter pylori J99).